Reading from the N-terminus, the 464-residue chain is Phosphoenolpyruvate carboxylase (464 aa).

This sequence belongs to the PEPCase type 2 family. In terms of assembly, homotetramer. Mg(2+) is required as a cofactor.

The catalysed reaction is oxaloacetate + phosphate = phosphoenolpyruvate + hydrogencarbonate. Its function is as follows. Catalyzes the irreversible beta-carboxylation of phosphoenolpyruvate (PEP) to form oxaloacetate (OAA), a four-carbon dicarboxylic acid source for the tricarboxylic acid cycle. The chain is Phosphoenolpyruvate carboxylase from Thermofilum pendens (strain DSM 2475 / Hrk 5).